The sequence spans 415 residues: L-cysteine:1D-myo-inositol 2-amino-2-deoxy-alpha-D-glucopyranoside ligase 2 (415 aa).

Residue Cys44 coordinates Zn(2+). L-cysteinyl-5'-AMP is bound by residues 44-47 (CGIT), Thr59, and 82-84 (NIT). Residues 46 to 56 (ITPYDSTHLGH) carry the 'HIGH' region motif. A 'ERGGDP' region motif is present at residues 188-193 (ERGGDP). Trp228 lines the L-cysteinyl-5'-AMP pocket. Residue Cys232 participates in Zn(2+) binding. Residue 250-252 (GSD) participates in L-cysteinyl-5'-AMP binding. Position 257 (His257) interacts with Zn(2+). L-cysteinyl-5'-AMP is bound at residue Ile284. The 'KMSKS' region motif lies at 290 to 294 (KMSKS).

It belongs to the class-I aminoacyl-tRNA synthetase family. MshC subfamily. In terms of assembly, monomer. It depends on Zn(2+) as a cofactor.

It carries out the reaction 1D-myo-inositol 2-amino-2-deoxy-alpha-D-glucopyranoside + L-cysteine + ATP = 1D-myo-inositol 2-(L-cysteinylamino)-2-deoxy-alpha-D-glucopyranoside + AMP + diphosphate + H(+). In terms of biological role, catalyzes the ATP-dependent condensation of GlcN-Ins and L-cysteine to form L-Cys-GlcN-Ins. The sequence is that of L-cysteine:1D-myo-inositol 2-amino-2-deoxy-alpha-D-glucopyranoside ligase 2 from Corynebacterium jeikeium (strain K411).